A 131-amino-acid chain; its full sequence is D-ribose pyranase (131 aa).

Catalysis depends on H20, which acts as the Proton donor. Substrate-binding positions include D28, H98, and 120–122 (YSN).

Belongs to the RbsD / FucU family. RbsD subfamily. Homodecamer.

It localises to the cytoplasm. It carries out the reaction beta-D-ribopyranose = beta-D-ribofuranose. The protein operates within carbohydrate metabolism; D-ribose degradation; D-ribose 5-phosphate from beta-D-ribopyranose: step 1/2. Catalyzes the interconversion of beta-pyran and beta-furan forms of D-ribose. The polypeptide is D-ribose pyranase (Limosilactobacillus reuteri (strain DSM 20016) (Lactobacillus reuteri)).